The chain runs to 353 residues: tRNA N6-adenosine threonylcarbamoyltransferase (353 aa).

Residues His119 and His123 each contribute to the Fe cation site. Residues 145–149 (LVSGG), Asp178, Gly191, and Asn285 contribute to the substrate site. Position 313 (Asp313) interacts with Fe cation.

This sequence belongs to the KAE1 / TsaD family. It depends on Fe(2+) as a cofactor.

It is found in the cytoplasm. It catalyses the reaction L-threonylcarbamoyladenylate + adenosine(37) in tRNA = N(6)-L-threonylcarbamoyladenosine(37) in tRNA + AMP + H(+). Functionally, required for the formation of a threonylcarbamoyl group on adenosine at position 37 (t(6)A37) in tRNAs that read codons beginning with adenine. Is involved in the transfer of the threonylcarbamoyl moiety of threonylcarbamoyl-AMP (TC-AMP) to the N6 group of A37, together with TsaE and TsaB. TsaD likely plays a direct catalytic role in this reaction. This Magnetococcus marinus (strain ATCC BAA-1437 / JCM 17883 / MC-1) protein is tRNA N6-adenosine threonylcarbamoyltransferase.